The sequence spans 389 residues: 3-ketoacyl-CoA thiolase (389 aa).

Cysteine 91 acts as the Acyl-thioester intermediate in catalysis. Active-site proton acceptor residues include histidine 343 and cysteine 373.

The protein belongs to the thiolase-like superfamily. Thiolase family. In terms of assembly, heterotetramer of two alpha chains (FadB) and two beta chains (FadA).

It localises to the cytoplasm. The catalysed reaction is an acyl-CoA + acetyl-CoA = a 3-oxoacyl-CoA + CoA. It participates in lipid metabolism; fatty acid beta-oxidation. Its function is as follows. Catalyzes the final step of fatty acid oxidation in which acetyl-CoA is released and the CoA ester of a fatty acid two carbons shorter is formed. In Pseudoalteromonas translucida (strain TAC 125), this protein is 3-ketoacyl-CoA thiolase.